A 521-amino-acid polypeptide reads, in one-letter code: Maturase K (521 aa).

The protein belongs to the intron maturase 2 family. MatK subfamily.

The protein resides in the plastid. It is found in the chloroplast. Usually encoded in the trnK tRNA gene intron. Probably assists in splicing its own and other chloroplast group II introns. The polypeptide is Maturase K (Trillium erectum (Beth root)).